Reading from the N-terminus, the 599-residue chain is 1-deoxy-D-xylulose-5-phosphate synthase (599 aa).

Residues His63 and 104-106 (GHS) contribute to the thiamine diphosphate site. Asp135 contacts Mg(2+). Thiamine diphosphate is bound by residues 136-137 (GA), Asn164, Tyr271, and Glu352. Asn164 is a Mg(2+) binding site.

This sequence belongs to the transketolase family. DXPS subfamily. In terms of assembly, homodimer. The cofactor is Mg(2+). It depends on thiamine diphosphate as a cofactor.

It carries out the reaction D-glyceraldehyde 3-phosphate + pyruvate + H(+) = 1-deoxy-D-xylulose 5-phosphate + CO2. The protein operates within metabolic intermediate biosynthesis; 1-deoxy-D-xylulose 5-phosphate biosynthesis; 1-deoxy-D-xylulose 5-phosphate from D-glyceraldehyde 3-phosphate and pyruvate: step 1/1. Catalyzes the acyloin condensation reaction between C atoms 2 and 3 of pyruvate and glyceraldehyde 3-phosphate to yield 1-deoxy-D-xylulose-5-phosphate (DXP). This chain is 1-deoxy-D-xylulose-5-phosphate synthase, found in Nitratiruptor sp. (strain SB155-2).